We begin with the raw amino-acid sequence, 186 residues long: ATP synthase subunit delta (186 aa).

It belongs to the ATPase delta chain family. F-type ATPases have 2 components, F(1) - the catalytic core - and F(0) - the membrane proton channel. F(1) has five subunits: alpha(3), beta(3), gamma(1), delta(1), epsilon(1). CF(0) has four main subunits: a(1), b(1), b'(1) and c(10-14). The alpha and beta chains form an alternating ring which encloses part of the gamma chain. F(1) is attached to F(0) by a central stalk formed by the gamma and epsilon chains, while a peripheral stalk is formed by the delta, b and b' chains.

It is found in the cell inner membrane. In terms of biological role, f(1)F(0) ATP synthase produces ATP from ADP in the presence of a proton or sodium gradient. F-type ATPases consist of two structural domains, F(1) containing the extramembraneous catalytic core and F(0) containing the membrane proton channel, linked together by a central stalk and a peripheral stalk. During catalysis, ATP synthesis in the catalytic domain of F(1) is coupled via a rotary mechanism of the central stalk subunits to proton translocation. This protein is part of the stalk that links CF(0) to CF(1). It either transmits conformational changes from CF(0) to CF(1) or is implicated in proton conduction. The sequence is that of ATP synthase subunit delta from Cereibacter sphaeroides (strain ATCC 17029 / ATH 2.4.9) (Rhodobacter sphaeroides).